We begin with the raw amino-acid sequence, 333 residues long: Protein SEEDLING LETHAL 1, chloroplastic (333 aa).

Residues Met1–Ser55 constitute a chloroplast transit peptide. Residues Pro38–Glu67 form a disordered region.

It belongs to the mTERF family. Self-interacts. Associates with the plastid-encoded RNA polymerase (PEP) complex. Interacts directly with PTAC7/PAP12, PTAC12/HMR/PAP5 and PTAC14/PAP7. In terms of tissue distribution, expressed in green aerial tissues such as cotyledons, leaves, flowers and siliques, but not in roots.

Its subcellular location is the plastid. It localises to the chloroplast stroma. The protein localises to the chloroplast nucleoid. Transcription termination factor required for chloroplast gene expression and protein synthesis in chloroplasts. Necessary for chloroplast photosynthetic complexes assembly by modulating the accumulation of photosynthetic proteins. Essential for embryogenesis. The chain is Protein SEEDLING LETHAL 1, chloroplastic from Arabidopsis thaliana (Mouse-ear cress).